The following is a 355-amino-acid chain: Protein RecA (355 aa).

Residue 72 to 79 participates in ATP binding; the sequence is GPESSGKT.

The protein belongs to the RecA family.

It is found in the cytoplasm. Can catalyze the hydrolysis of ATP in the presence of single-stranded DNA, the ATP-dependent uptake of single-stranded DNA by duplex DNA, and the ATP-dependent hybridization of homologous single-stranded DNAs. It interacts with LexA causing its activation and leading to its autocatalytic cleavage. The sequence is that of Protein RecA from Wolbachia pipientis subsp. Culex pipiens (strain wPip).